A 125-amino-acid chain; its full sequence is Large ribosomal subunit protein bL17 (125 aa).

This sequence belongs to the bacterial ribosomal protein bL17 family. As to quaternary structure, part of the 50S ribosomal subunit. Contacts protein L32.

This chain is Large ribosomal subunit protein bL17, found in Blochmanniella pennsylvanica (strain BPEN).